Here is a 456-residue protein sequence, read N- to C-terminus: NADPH-ferredoxin reductase FprA (456 aa).

Residues serine 17, glutamate 43, leucine 51, and valine 87 each coordinate FAD. NADP(+)-binding positions include arginine 113, 158–161, 202–203, and glutamate 214; these read NGNV and RR. FAD contacts are provided by residues tryptophan 362 and 369-371; that span reads GVI. Position 369 (glycine 369) interacts with NADP(+).

The protein belongs to the ferredoxin--NADP reductase type 1 family. Monomer. The cofactor is FAD.

It carries out the reaction 2 reduced [2Fe-2S]-[ferredoxin] + NADP(+) + H(+) = 2 oxidized [2Fe-2S]-[ferredoxin] + NADPH. Its function is as follows. May serve as electron transfer protein and supply electrons to P450 systems. This Mycobacterium leprae (strain TN) protein is NADPH-ferredoxin reductase FprA (fprA).